Here is a 275-residue protein sequence, read N- to C-terminus: 2,3,4,5-tetrahydropyridine-2,6-dicarboxylate N-succinyltransferase (275 aa).

The substrate site is built by Arg-106 and Asp-143.

This sequence belongs to the transferase hexapeptide repeat family. As to quaternary structure, homotrimer.

Its subcellular location is the cytoplasm. The catalysed reaction is (S)-2,3,4,5-tetrahydrodipicolinate + succinyl-CoA + H2O = (S)-2-succinylamino-6-oxoheptanedioate + CoA. The protein operates within amino-acid biosynthesis; L-lysine biosynthesis via DAP pathway; LL-2,6-diaminopimelate from (S)-tetrahydrodipicolinate (succinylase route): step 1/3. The sequence is that of 2,3,4,5-tetrahydropyridine-2,6-dicarboxylate N-succinyltransferase from Burkholderia pseudomallei (strain 1106a).